A 295-amino-acid chain; its full sequence is Bifunctional protein FolD (295 aa).

Residues 169-171, Ser-194, and Ile-235 contribute to the NADP(+) site; that span reads GRS.

Belongs to the tetrahydrofolate dehydrogenase/cyclohydrolase family. In terms of assembly, homodimer.

It catalyses the reaction (6R)-5,10-methylene-5,6,7,8-tetrahydrofolate + NADP(+) = (6R)-5,10-methenyltetrahydrofolate + NADPH. The enzyme catalyses (6R)-5,10-methenyltetrahydrofolate + H2O = (6R)-10-formyltetrahydrofolate + H(+). Its pathway is one-carbon metabolism; tetrahydrofolate interconversion. Functionally, catalyzes the oxidation of 5,10-methylenetetrahydrofolate to 5,10-methenyltetrahydrofolate and then the hydrolysis of 5,10-methenyltetrahydrofolate to 10-formyltetrahydrofolate. The sequence is that of Bifunctional protein FolD from Acaryochloris marina (strain MBIC 11017).